Here is a 154-residue protein sequence, read N- to C-terminus: 6,7-dimethyl-8-ribityllumazine synthase (154 aa).

5-amino-6-(D-ribitylamino)uracil contacts are provided by residues Phe-24, 56-58 (SFE), and 80-82 (AVV). 85 to 86 (ET) serves as a coordination point for (2S)-2-hydroxy-3-oxobutyl phosphate. His-88 acts as the Proton donor in catalysis. Phe-113 is a binding site for 5-amino-6-(D-ribitylamino)uracil. Arg-127 provides a ligand contact to (2S)-2-hydroxy-3-oxobutyl phosphate.

The protein belongs to the DMRL synthase family.

The catalysed reaction is (2S)-2-hydroxy-3-oxobutyl phosphate + 5-amino-6-(D-ribitylamino)uracil = 6,7-dimethyl-8-(1-D-ribityl)lumazine + phosphate + 2 H2O + H(+). It functions in the pathway cofactor biosynthesis; riboflavin biosynthesis; riboflavin from 2-hydroxy-3-oxobutyl phosphate and 5-amino-6-(D-ribitylamino)uracil: step 1/2. Functionally, catalyzes the formation of 6,7-dimethyl-8-ribityllumazine by condensation of 5-amino-6-(D-ribitylamino)uracil with 3,4-dihydroxy-2-butanone 4-phosphate. This is the penultimate step in the biosynthesis of riboflavin. The protein is 6,7-dimethyl-8-ribityllumazine synthase of Thermococcus gammatolerans (strain DSM 15229 / JCM 11827 / EJ3).